The chain runs to 305 residues: Homoserine O-acetyltransferase (305 aa).

Residue C142 is the Acyl-thioester intermediate of the active site. Positions 163 and 192 each coordinate substrate. H235 serves as the catalytic Proton acceptor. E237 is a catalytic residue. R249 is a substrate binding site.

It belongs to the MetA family.

It is found in the cytoplasm. It catalyses the reaction L-homoserine + acetyl-CoA = O-acetyl-L-homoserine + CoA. It participates in amino-acid biosynthesis; L-methionine biosynthesis via de novo pathway; O-acetyl-L-homoserine from L-homoserine: step 1/1. Functionally, transfers an acetyl group from acetyl-CoA to L-homoserine, forming acetyl-L-homoserine. The chain is Homoserine O-acetyltransferase from Cereibacter sphaeroides (strain ATCC 17025 / ATH 2.4.3) (Rhodobacter sphaeroides).